The sequence spans 595 residues: Alpha-1,3-galactosidase B (595 aa).

An N-terminal signal peptide occupies residues 1–22 (MKTILLFALSLLLSLSVSDVCA). PbH1 repeat units lie at residues 432-454 (TPEV…LFST), 455-477 (PKKT…LLCG), and 488-541 (CRDV…VIED).

It belongs to the glycosyl hydrolase 110 family. B subfamily.

The catalysed reaction is Hydrolysis of terminal, non-reducing branched (1-&gt;3)-alpha-D-galactosidic residues, producing free D-galactose.. It catalyses the reaction Hydrolysis of terminal, non-reducing linear (1-&gt;3)-alpha-D-galactosidic residues, producing free D-galactose.. It carries out the reaction Hydrolysis of terminal, non-reducing alpha-D-galactose residues in alpha-D-galactosides, including galactose oligosaccharides, galactomannans and galactolipids.. Its function is as follows. Alpha-galactosidase. Removes both branched alpha-1,3-linked galactose residues of blood group B antigens and linear alpha-1,3-linked galactose structures. This is Alpha-1,3-galactosidase B (glaB) from Bacteroides fragilis (strain YCH46).